We begin with the raw amino-acid sequence, 311 residues long: Halocin-S8 (311 aa).

2 consecutive propeptides follow at residues 1-230 and 267-311; these read MSDK…IQLQ and TVAC…TSFW.

The protein resides in the secreted. In terms of biological role, has antibacterial activity against the haloarchaeons H.salinarium NRC817, Halobacterium GRB and H.gibbonsii. This chain is Halocin-S8 (halS8), found in Haloarchaeon S8a.